An 805-amino-acid polypeptide reads, in one-letter code: MTDQAESSDSKNAKKDFSTAILERKKAANRLVVDEAVNDDNSVVALHPATMEKLQLFRGDTILIKGKKRKDTVVIALADETCDEPKIRMNKVVRSNLRVRLGDVVSVHQCPDVKYGKRVHILPIDDTIEGLTGDLFDAFLKPYFLEAYRPLRKGDNFLVRGGMRSVEFKVIETDPGEYCVVAPDTEIFCEGEPVKREDEERLDEVGYDDVGGVRKQMAQIRELVELPLRHPQLFKSIGVKPPKGILLYGPPGSGKTLIARAVANETGAFFFCINGPEIMSKLAGESESNLRKAFEEAEKNAPSIIFIDEIDSIAPKREKTHGEVERRIVSQLLTLMDGLKSRAHVIVMGATNRPNSIDPALRRFGRFDREIDIGVPDEVGRLEVLGIHTKNMKLAEEVDLERISKDTHGYVGADLAALCTEAALQCIREKMDVLDLEDDTIDAEVLNSMAVTNEHFQTALGTSNPSALRETVVEVPNVSWEDIGGLENVKRELQETVQYPVEPPEKFEKFGMSPSKGVLFYGPPGCGKTLLAKAIANECQANFISVKGPELLTMWFGESEANVREIFDKARQSAPCVLFFDELDSIATQRGSSSGDAGGAADRVLNQLLTEMDGMNAKKTVFIIGATNRPDIIDPALLRPGRLDQLIYIPLPDEDSRHQIFKACLRKSPLSKDIDLRALAKHTQGFSGADVTEICQRACKYAIRENIEKDIEREKRRQENPDSMDEDVDEVPEIKPAHFEESMKYARRSVSDADIRKYQAFAQTLQQSRGFGTEFRFADTSGGATAAADPFATSNAAADDDDLYS.

ATP contacts are provided by residues 249-256 and 522-529; these read GPPGSGKT and GPPGCGKT. Residues 783–805 are disordered; the sequence is GATAAADPFATSNAAADDDDLYS.

It belongs to the AAA ATPase family.

In terms of biological role, probably functions in cell division and growth processes. In Capsicum annuum (Capsicum pepper), this protein is Cell division cycle protein 48 homolog (CAFP).